The primary structure comprises 392 residues: Protein FAM53C (392 aa).

Methionine 1 bears the N-acetylmethionine mark. The disordered stretch occupies residues leucine 78–arginine 119. Polar residues predominate over residues arginine 83–serine 93. 6 positions are modified to phosphoserine: serine 122, serine 162, serine 232, serine 234, serine 255, and serine 273. Disordered stretches follow at residues leucine 141–valine 167 and arginine 204–arginine 294. Over residues alanine 241 to proline 256 the composition is skewed to low complexity. Residues leucine 278 to arginine 294 are compositionally biased toward basic and acidic residues. At serine 299 the chain carries Phosphoserine. The segment at alanine 341–valine 364 is disordered.

It belongs to the FAM53 family.

This chain is Protein FAM53C, found in Homo sapiens (Human).